The primary structure comprises 400 residues: NADH dehydrogenase-like protein Rv1812c (400 aa).

It belongs to the NADH dehydrogenase family. It depends on FAD as a cofactor.

The protein is NADH dehydrogenase-like protein Rv1812c of Mycobacterium tuberculosis (strain ATCC 25618 / H37Rv).